The primary structure comprises 1225 residues: DNA-directed RNA polymerase subunit beta' (1225 aa).

Residues cysteine 60, cysteine 62, cysteine 75, and cysteine 78 each coordinate Zn(2+). Mg(2+)-binding residues include aspartate 450, aspartate 452, and aspartate 454. Zn(2+)-binding residues include cysteine 818, cysteine 892, cysteine 899, and cysteine 902.

The protein belongs to the RNA polymerase beta' chain family. The RNAP catalytic core consists of 2 alpha, 1 beta, 1 beta' and 1 omega subunit. When a sigma factor is associated with the core the holoenzyme is formed, which can initiate transcription. Requires Mg(2+) as cofactor. It depends on Zn(2+) as a cofactor.

It catalyses the reaction RNA(n) + a ribonucleoside 5'-triphosphate = RNA(n+1) + diphosphate. DNA-dependent RNA polymerase catalyzes the transcription of DNA into RNA using the four ribonucleoside triphosphates as substrates. The polypeptide is DNA-directed RNA polymerase subunit beta' (Streptococcus pneumoniae (strain ATCC BAA-255 / R6)).